A 349-amino-acid polypeptide reads, in one-letter code: Histidinol-phosphate aminotransferase (349 aa).

Residue Lys206 is modified to N6-(pyridoxal phosphate)lysine.

The protein belongs to the class-II pyridoxal-phosphate-dependent aminotransferase family. Histidinol-phosphate aminotransferase subfamily. Homodimer. It depends on pyridoxal 5'-phosphate as a cofactor.

It carries out the reaction L-histidinol phosphate + 2-oxoglutarate = 3-(imidazol-4-yl)-2-oxopropyl phosphate + L-glutamate. Its pathway is amino-acid biosynthesis; L-histidine biosynthesis; L-histidine from 5-phospho-alpha-D-ribose 1-diphosphate: step 7/9. The polypeptide is Histidinol-phosphate aminotransferase (Streptococcus mutans serotype c (strain ATCC 700610 / UA159)).